We begin with the raw amino-acid sequence, 397 residues long: MKVIDGTIASPLGFSADGLHAGFKKRKMDFGWIVSEKPASVAGVYTTNKVIAAPLIVTKTSVKKAGKMRAIVVNSGVANSCTGTQGLEDAYTMQEWTAEKLGVEPDMIGVASTGIIGELLPMDTLKNGLSKLVVNGNANDFAKAILTTDTATKTIAVTETFGRDVVTMAGVAKGSGMIHPNMATMLGFITCDANISSDTLQLALSQNVEKTFNQITVDGDTSTNDMVLVMSNGCALNDEILPDTPEFDKFSKMLNFVMQELAKKIAKDGEGANKLIQVDVVNAPNALDARMMAKSVVGSSLVKTAIFGEDPNWGRILAAVGYAGVDVPVDNVDIMLGGLPVMLASSPVTFDDEEMKDIMHGDEVTITVDLHSGQEKGTAWGCDLSYDYVKINALYHT.

Residues threonine 147, lysine 173, threonine 184, glutamate 270, asparagine 392, and threonine 397 each coordinate substrate. Residue threonine 184 is the Nucleophile of the active site.

This sequence belongs to the ArgJ family. In terms of assembly, heterotetramer of two alpha and two beta chains.

It localises to the cytoplasm. It carries out the reaction N(2)-acetyl-L-ornithine + L-glutamate = N-acetyl-L-glutamate + L-ornithine. The catalysed reaction is L-glutamate + acetyl-CoA = N-acetyl-L-glutamate + CoA + H(+). It functions in the pathway amino-acid biosynthesis; L-arginine biosynthesis; L-ornithine and N-acetyl-L-glutamate from L-glutamate and N(2)-acetyl-L-ornithine (cyclic): step 1/1. It participates in amino-acid biosynthesis; L-arginine biosynthesis; N(2)-acetyl-L-ornithine from L-glutamate: step 1/4. Its function is as follows. Catalyzes two activities which are involved in the cyclic version of arginine biosynthesis: the synthesis of N-acetylglutamate from glutamate and acetyl-CoA as the acetyl donor, and of ornithine by transacetylation between N(2)-acetylornithine and glutamate. This Streptococcus thermophilus (strain CNRZ 1066) protein is Arginine biosynthesis bifunctional protein ArgJ.